Consider the following 1607-residue polypeptide: Phosphatidylinositol 3-kinase piki-1 (1607 aa).

Residues 2-21 (SDDEELQLAIEISKKTFKDE) enclose the UIM domain. 3 disordered regions span residues 54 to 91 (EANS…HSQS), 105 to 128 (STSQ…KFPP), and 142 to 182 (PPPP…SFAS). Residues 58–69 (PGPSSYSGSLAT) are compositionally biased toward polar residues. Pro residues predominate over residues 158–169 (PPVPIHPTPPVS). One can recognise a PI3K-RBD domain in the interval 362–453 (ASTVKVVVYK…GDDVKLDLGV (92 aa)). In terms of domain architecture, C2 PI3K-type spans 598 to 766 (KMDFLQIMLN…KIWDTEIYFP (169 aa)). Residues 776–953 (PQDFATLDIE…AIRCQNLQQK (178 aa)) enclose the PIK helical domain. The region spanning 1029-1303 (RIEECSVFNS…MIQNSLGSAF (275 aa)) is the PI3K/PI4K catalytic domain. Residues 1035–1041 (VFNSNAK) form a G-loop region. Positions 1168–1176 (GIGDRHNDN) are catalytic loop. Residues 1187 to 1213 (HIDFGKYMGDWQMAAGFRRDRVPFVFT) form an activation loop region. In terms of domain architecture, PX spans 1344–1458 (GRISRVTVLK…TFFHSILRDN (115 aa)). Residues 1472–1601 (SQCQIYLKIE…KNCRTLEGWF (130 aa)) form the C2 domain.

The protein belongs to the PI3/PI4-kinase family.

It localises to the cell projection. The protein resides in the phagocytic cup. Its subcellular location is the cytoplasmic vesicle. The protein localises to the phagosome membrane. It is found in the cytoplasm. The catalysed reaction is a 1,2-diacyl-sn-glycero-3-phospho-(1D-myo-inositol) + ATP = a 1,2-diacyl-sn-glycero-3-phospho-(1D-myo-inositol-3-phosphate) + ADP + H(+). Functionally, phosphatidylinositol 3-kinase involved in clearance of apoptotic cell corpses by phagosomes. Phagosome maturation requires two sequential and non-overlapping pulses of phosphatidylinositol-3-phosphate (PI3P) on the vesicle surface which mediates recruitment of sortins snx-1 and lst-4 and small GTPases rab-5, rab-2 and rab-7. The first pulse is initiated by piki-1, then maintained by vps-34 which also produces the second pulse. Unlike vps-34, not involved in the formation of PI3P in early endosomes. The polypeptide is Phosphatidylinositol 3-kinase piki-1 (Caenorhabditis elegans).